The chain runs to 649 residues: Leucine-rich repeat transmembrane protein FLRT3 (649 aa).

The signal sequence occupies residues 1–28 (MISAAWSIFLIGTKIGLFLQVAPLSVMA). The LRRNT domain maps to 29–58 (KSCPSVCRCDAGFIYCNDRFLTSIPTGIPE). The Extracellular segment spans residues 29-528 (KSCPSVCRCD…KEPYKNPNLP (500 aa)). Intrachain disulfides connect Cys-31-Cys-37 and Cys-35-Cys-44. The interval 38-67 (DAGFIYCNDRFLTSIPTGIPEDATTLYLQN) is interaction with ADGRL3. LRR repeat units lie at residues 59–80 (DATT…SDLK), 84–104 (KVER…NLPK), 105–126 (YVKE…SLSK), 129–150 (YLEE…EGAF), 155–175 (YLRL…GLPR), 176–197 (TIEE…SLQG), 200–220 (SLKR…GDKV), 226–247 (NLTE…LPGT), 248–269 (NLRK…AFSY), and 272–293 (QLYR…IFDD). N-linked (GlcNAc...) asparagine glycosylation is present at Asn-226. Residues Asn-282 and Asn-296 are each glycosylated (N-linked (GlcNAc...) asparagine). An LRRCT domain is found at 305-357 (NPWYCGCKMKWVRDWLQSLPVKVNVRGLMCQAPEKVRGMAIKDLNAELFDCKD). The cysteines at positions 309 and 334 are disulfide-linked. The disordered stretch occupies residues 387–407 (KQPDIKNPKLTKDHQTTGSPS). Positions 389-401 (PDIKNPKLTKDHQ) are enriched in basic and acidic residues. Residues 409–504 (KTITITVKSV…VCIETETAPL (96 aa)) enclose the Fibronectin type-III domain. Residues 529–549 (LAAIIGGAVALVTIALLALVC) traverse the membrane as a helical segment. The Cytoplasmic segment spans residues 550–649 (WYVHRNGSLF…GIPDSDHSHS (100 aa)). Positions 622 to 649 (LYKNNHSESSSNRSYRDSGIPDSDHSHS) are disordered.

As to quaternary structure, monomer and homodimer. Self-associates (via leucine-rich repeats), giving rise to homooligomers. Interacts with FGFR1. Interacts (via extracellular domain) with ADGRL1/LPHN1 and LPHN2 (via olfactomedin-like domain). Interacts (via extracellular domain) with ADGRL3 (via olfactomedin-like domain); the interaction is direct. Interacts (via extracellular domain) with UNC5B and UNC5D (via extracellular domain); the interaction is direct. Identified in complexes composed of FLRT3, ADGRL3 and UNC5B, respectively FLRT3, ADGRL3 and UNC5D. May also interact (via extracellular domain) with UNC5A and UNC5C. Interacts (via cytoplasmic domain) with ROBO1. N-glycosylated. Post-translationally, proteolytic cleavage in the juxtamembrane region gives rise to a soluble ectodomain. Cleavage is probably effected by a metalloprotease. As to expression, expressed in kidney, brain, pancreas, skeletal muscle, lung, liver, placenta, and heart.

The protein resides in the cell membrane. Its subcellular location is the presynaptic cell membrane. It is found in the endoplasmic reticulum membrane. The protein localises to the cell junction. It localises to the focal adhesion. The protein resides in the secreted. Its subcellular location is the cell projection. It is found in the axon. The protein localises to the growth cone membrane. Functionally, functions in cell-cell adhesion, cell migration and axon guidance, exerting an attractive or repulsive role depending on its interaction partners. Plays a role in the spatial organization of brain neurons. Plays a role in vascular development in the retina. Plays a role in cell-cell adhesion via its interaction with ADGRL3 and probably also other latrophilins that are expressed at the surface of adjacent cells. Interaction with the intracellular domain of ROBO1 mediates axon attraction towards cells expressing NTN1. Mediates axon growth cone collapse and plays a repulsive role in neuron guidance via its interaction with UNC5B, and possibly also other UNC-5 family members. Promotes neurite outgrowth (in vitro). Mediates cell-cell contacts that promote an increase both in neurite number and in neurite length. Plays a role in the regulation of the density of glutamaergic synapses. Plays a role in fibroblast growth factor-mediated signaling cascades. Required for normal morphogenesis during embryonic development, but not for normal embryonic patterning. Required for normal ventral closure, headfold fusion and definitive endoderm migration during embryonic development. Required for the formation of a normal basement membrane and the maintenance of a normal anterior visceral endoderm during embryonic development. The sequence is that of Leucine-rich repeat transmembrane protein FLRT3 (FLRT3) from Homo sapiens (Human).